A 754-amino-acid polypeptide reads, in one-letter code: 5-methyltetrahydropteroyltriglutamate--homocysteine methyltransferase (754 aa).

5-methyltetrahydropteroyltri-L-glutamate-binding positions include 16–19 (RELK) and Lys-114. L-homocysteine contacts are provided by residues 430 to 432 (IGS) and Glu-483. L-methionine-binding positions include 430–432 (IGS) and Glu-483. Residues 514–515 (RC) and Trp-560 contribute to the 5-methyltetrahydropteroyltri-L-glutamate site. Asp-598 is an L-homocysteine binding site. L-methionine is bound at residue Asp-598. Glu-604 provides a ligand contact to 5-methyltetrahydropteroyltri-L-glutamate. Residues His-640, Cys-642, and Glu-664 each coordinate Zn(2+). Residue His-693 is the Proton donor of the active site. Cys-725 is a Zn(2+) binding site.

Belongs to the vitamin-B12 independent methionine synthase family. Zn(2+) is required as a cofactor.

The enzyme catalyses 5-methyltetrahydropteroyltri-L-glutamate + L-homocysteine = tetrahydropteroyltri-L-glutamate + L-methionine. Its pathway is amino-acid biosynthesis; L-methionine biosynthesis via de novo pathway; L-methionine from L-homocysteine (MetE route): step 1/1. Functionally, catalyzes the transfer of a methyl group from 5-methyltetrahydrofolate to homocysteine resulting in methionine formation. This Aeromonas salmonicida (strain A449) protein is 5-methyltetrahydropteroyltriglutamate--homocysteine methyltransferase.